We begin with the raw amino-acid sequence, 603 residues long: DNA mismatch repair protein MutL (603 aa).

It belongs to the DNA mismatch repair MutL/HexB family.

This protein is involved in the repair of mismatches in DNA. It is required for dam-dependent methyl-directed DNA mismatch repair. May act as a 'molecular matchmaker', a protein that promotes the formation of a stable complex between two or more DNA-binding proteins in an ATP-dependent manner without itself being part of a final effector complex. This Nitrobacter hamburgensis (strain DSM 10229 / NCIMB 13809 / X14) protein is DNA mismatch repair protein MutL.